The sequence spans 295 residues: 4-hydroxy-tetrahydrodipicolinate synthase (295 aa).

Threonine 47 provides a ligand contact to pyruvate. Tyrosine 135 (proton donor/acceptor) is an active-site residue. Residue lysine 163 is the Schiff-base intermediate with substrate of the active site. Isoleucine 204 provides a ligand contact to pyruvate.

This sequence belongs to the DapA family. In terms of assembly, homotetramer; dimer of dimers.

It is found in the cytoplasm. The enzyme catalyses L-aspartate 4-semialdehyde + pyruvate = (2S,4S)-4-hydroxy-2,3,4,5-tetrahydrodipicolinate + H2O + H(+). It functions in the pathway amino-acid biosynthesis; L-lysine biosynthesis via DAP pathway; (S)-tetrahydrodipicolinate from L-aspartate: step 3/4. Functionally, catalyzes the condensation of (S)-aspartate-beta-semialdehyde [(S)-ASA] and pyruvate to 4-hydroxy-tetrahydrodipicolinate (HTPA). In Caldicellulosiruptor saccharolyticus (strain ATCC 43494 / DSM 8903 / Tp8T 6331), this protein is 4-hydroxy-tetrahydrodipicolinate synthase.